Consider the following 348-residue polypeptide: 3-isopropylmalate dehydrogenase (348 aa).

76–87 is an NAD(+) binding site; sequence GPKWTDPNNRPE. Positions 94, 104, 132, and 217 each coordinate substrate. 3 residues coordinate Mg(2+): Asp-217, Asp-241, and Asp-245. NAD(+) is bound at residue 275 to 287; sequence GSAPDIAGKNVAN.

This sequence belongs to the isocitrate and isopropylmalate dehydrogenases family. LeuB type 1 subfamily. Homodimer. Requires Mg(2+) as cofactor. The cofactor is Mn(2+).

The protein localises to the cytoplasm. The enzyme catalyses (2R,3S)-3-isopropylmalate + NAD(+) = 4-methyl-2-oxopentanoate + CO2 + NADH. Its pathway is amino-acid biosynthesis; L-leucine biosynthesis; L-leucine from 3-methyl-2-oxobutanoate: step 3/4. Its function is as follows. Catalyzes the oxidation of 3-carboxy-2-hydroxy-4-methylpentanoate (3-isopropylmalate) to 3-carboxy-4-methyl-2-oxopentanoate. The product decarboxylates to 4-methyl-2 oxopentanoate. This is 3-isopropylmalate dehydrogenase from Staphylococcus aureus (strain MW2).